Consider the following 458-residue polypeptide: Phosphoglucosamine mutase (458 aa).

The Phosphoserine intermediate role is filled by S106. Residues S106, D247, D249, and D251 each coordinate Mg(2+). The residue at position 106 (S106) is a Phosphoserine.

It belongs to the phosphohexose mutase family. The cofactor is Mg(2+). Post-translationally, activated by phosphorylation.

It catalyses the reaction alpha-D-glucosamine 1-phosphate = D-glucosamine 6-phosphate. Catalyzes the conversion of glucosamine-6-phosphate to glucosamine-1-phosphate. The sequence is that of Phosphoglucosamine mutase from Chlamydia trachomatis serovar D (strain ATCC VR-885 / DSM 19411 / UW-3/Cx).